The following is a 208-amino-acid chain: MVEFVKICGVKTMDELRLVERYADATGVVVNSRSKRKVPLKTAAELIEMAEIPIYLVSTMKTFPEWANAVEKTGAEYIQVHSDMHPKAVNRLKDEYGVSVMKAFMVPRESDDPAEDAERLLELIGQYEVDKILLDTGVGSGRRHDYRVSAIIAKEYPIVLAGGLTPENVGEAIRWVKPAGVDVSSGVERNGVKDRVLIEAFMAVVRNG.

Belongs to the TrpF family.

It catalyses the reaction N-(5-phospho-beta-D-ribosyl)anthranilate = 1-(2-carboxyphenylamino)-1-deoxy-D-ribulose 5-phosphate. It participates in amino-acid biosynthesis; L-tryptophan biosynthesis; L-tryptophan from chorismate: step 3/5. This is N-(5'-phosphoribosyl)anthranilate isomerase (trpF) from Thermococcus kodakarensis (strain ATCC BAA-918 / JCM 12380 / KOD1) (Pyrococcus kodakaraensis (strain KOD1)).